The primary structure comprises 170 residues: RNA polymerase sigma factor TcsR (170 aa).

The sigma-70 factor domain-4 stretch occupies residues 122 to 169; it reads IKDLTQNEKNILRKIYLHGLRESEISRELNISRQAVNKTHLRALEKLK. The segment at residues 143 to 162 is a DNA-binding region (H-T-H motif); that stretch reads ESEISRELNISRQAVNKTHL.

This sequence belongs to the sigma-70 factor family.

In terms of biological role, sigma factors are initiation factors that promote the attachment of RNA polymerase to specific initiation sites and are then released. Transcriptional regulator specifically required to activate expression of the toxin gene locus, composed of tcsL and tcdE/utxA. The chain is RNA polymerase sigma factor TcsR from Paraclostridium sordellii (strain ATCC 9714 / DSM 2141 / JCM 3814 / LMG 15708 / NCIMB 10717 / 211) (Clostridium sordellii).